We begin with the raw amino-acid sequence, 173 residues long: Pyridoxal 5'-phosphate synthase subunit PdxT (173 aa).

Residue 49–51 participates in L-glutamine binding; it reads GES. The active-site Nucleophile is C81. L-glutamine contacts are provided by residues R113 and 141 to 142; that span reads IR.

It belongs to the glutaminase PdxT/SNO family. As to quaternary structure, in the presence of PdxS, forms a dodecamer of heterodimers. Only shows activity in the heterodimer.

The catalysed reaction is aldehydo-D-ribose 5-phosphate + D-glyceraldehyde 3-phosphate + L-glutamine = pyridoxal 5'-phosphate + L-glutamate + phosphate + 3 H2O + H(+). It catalyses the reaction L-glutamine + H2O = L-glutamate + NH4(+). It functions in the pathway cofactor biosynthesis; pyridoxal 5'-phosphate biosynthesis. Catalyzes the hydrolysis of glutamine to glutamate and ammonia as part of the biosynthesis of pyridoxal 5'-phosphate. The resulting ammonia molecule is channeled to the active site of PdxS. This is Pyridoxal 5'-phosphate synthase subunit PdxT from Mycolicibacterium paratuberculosis (strain ATCC BAA-968 / K-10) (Mycobacterium paratuberculosis).